Reading from the N-terminus, the 363-residue chain is MQLQEIAQKLGCAYEGDPTLEIHSVASLAEARPGELSFLSEARYLPLLEQTQASAVIVEEGLALPCSIACLRGRDPRLLFAQAIELFYQPYRLPVGIHPTAVIDPSVELGEGVAIGPHAVVMEGVKIGDHTQIHPNVTIYPHVRIGSRCQLFANCVIHERTEIGDDCLIHSGAVIGDDGFGHIPLADGSWRRMLQAGRVVLEDNVEVGSNTTIDRAAVGETRIGRGTKIDNLVQIGHGVRTGSHCLIVAQVGIAGSTQLGHHVILAGQCGLAGHLHIGDGVRVAAQTGVTSDVPAGQTVAGYPHQPIAEWRKSMAVQRHLPELQRTLRKLEARVAKLEQNSTDRAPNAKMLEVGVDPETTCSS.

The active-site Proton acceptor is the His-237. The interval 338–363 (EQNSTDRAPNAKMLEVGVDPETTCSS) is disordered.

Belongs to the transferase hexapeptide repeat family. LpxD subfamily. In terms of assembly, homotrimer.

It carries out the reaction a UDP-3-O-[(3R)-3-hydroxyacyl]-alpha-D-glucosamine + a (3R)-hydroxyacyl-[ACP] = a UDP-2-N,3-O-bis[(3R)-3-hydroxyacyl]-alpha-D-glucosamine + holo-[ACP] + H(+). It participates in bacterial outer membrane biogenesis; LPS lipid A biosynthesis. Catalyzes the N-acylation of UDP-3-O-acylglucosamine using 3-hydroxyacyl-ACP as the acyl donor. Is involved in the biosynthesis of lipid A, a phosphorylated glycolipid that anchors the lipopolysaccharide to the outer membrane of the cell. The protein is UDP-3-O-acylglucosamine N-acyltransferase of Synechococcus sp. (strain JA-2-3B'a(2-13)) (Cyanobacteria bacterium Yellowstone B-Prime).